The primary structure comprises 284 residues: L-ribulose-5-phosphate 3-epimerase UlaE (284 aa).

Belongs to the L-ribulose-5-phosphate 3-epimerase family.

The enzyme catalyses L-ribulose 5-phosphate = L-xylulose 5-phosphate. It functions in the pathway cofactor degradation; L-ascorbate degradation; D-xylulose 5-phosphate from L-ascorbate: step 3/4. Catalyzes the isomerization of L-xylulose-5-phosphate to L-ribulose-5-phosphate. Is involved in the anaerobic L-ascorbate utilization. This Escherichia coli (strain K12 / MC4100 / BW2952) protein is L-ribulose-5-phosphate 3-epimerase UlaE.